The chain runs to 749 residues: Chitin synthase G (749 aa).

The next 5 membrane-spanning stretches (helical) occupy residues 40–60 (CVGE…PLPP), 73–93 (VLQW…WLFC), 421–441 (FMQN…ISII), 451–471 (PVGF…YFGI), and 483–503 (LMFI…IFTA). A disordered region spans residues 683 to 749 (IESGSGIPSG…RRYMQPEQMV (67 aa)). Residues 697-718 (LSSSVPQSGMQQSRAVPGNMSQ) are compositionally biased toward polar residues. N-linked (GlcNAc...) asparagine glycosylation is present at N715. Positions 728 to 742 (YTKRPSRIPRQKRRY) are enriched in basic residues.

This sequence belongs to the chitin synthase family. Class VI subfamily.

The protein localises to the cell membrane. The enzyme catalyses [(1-&gt;4)-N-acetyl-beta-D-glucosaminyl](n) + UDP-N-acetyl-alpha-D-glucosamine = [(1-&gt;4)-N-acetyl-beta-D-glucosaminyl](n+1) + UDP + H(+). Its function is as follows. Polymerizes chitin, a structural polymer of the cell wall and septum, by transferring the sugar moiety of UDP-GlcNAc to the non-reducing end of the growing chitin polymer. Plays an important role in septal growth or maintenance. Mediates colony spore formation. This Aspergillus niger (strain ATCC MYA-4892 / CBS 513.88 / FGSC A1513) protein is Chitin synthase G.